Consider the following 66-residue polypeptide: Protein KleD (66 aa).

Positions 33–52 (VAVRSGNEWQQVTKWVEPAR) form a DNA-binding region, H-T-H motif.

The chain is Protein KleD (kleD) from Escherichia coli.